We begin with the raw amino-acid sequence, 584 residues long: tRNA-guanine(15) transglycosylase (584 aa).

D95 acts as the Nucleophile in catalysis. The substrate site is built by D130 and G196. The Zn(2+) site is built by C279, C281, and C284. In terms of domain architecture, PUA spans 507-582 (RMRVVVSEEA…RAVKVRRGIS (76 aa)).

Belongs to the archaeosine tRNA-ribosyltransferase family. It depends on Zn(2+) as a cofactor.

It carries out the reaction guanosine(15) in tRNA + 7-cyano-7-deazaguanine = 7-cyano-7-carbaguanosine(15) in tRNA + guanine. It functions in the pathway tRNA modification; archaeosine-tRNA biosynthesis. Functionally, exchanges the guanine residue with 7-cyano-7-deazaguanine (preQ0) at position 15 in the dihydrouridine loop (D-loop) of archaeal tRNAs. This is tRNA-guanine(15) transglycosylase from Pyrococcus abyssi (strain GE5 / Orsay).